We begin with the raw amino-acid sequence, 151 residues long: MGTLILDSMVNKEAVLREAPPGTILVTVGDVTSERISGFGMTPLLQIIDGKTRRAAHEPAGPPPDVEIIRCENPAGGISPECIETIRRALGSSSPLRLVVSGEEDLLVIPACIYAPDGAVIMYGQPGRGLVAIHVDAGIRYKAKGLLDSVS.

5 residues coordinate GTP: aspartate 30, valine 31, aspartate 49, lysine 51, and glutamate 104.

The protein belongs to the GTP-dependent DPCK family.

It catalyses the reaction 3'-dephospho-CoA + GTP = GDP + CoA + H(+). It functions in the pathway cofactor biosynthesis; coenzyme A biosynthesis. Catalyzes the GTP-dependent phosphorylation of the 3'-hydroxyl group of dephosphocoenzyme A to form coenzyme A (CoA). The polypeptide is GTP-dependent dephospho-CoA kinase (Cenarchaeum symbiosum (strain A)).